The chain runs to 418 residues: MSFPKVIVVSTGSELTAGRSQDTNSSWIANELFGMGFTVSKFVVLPDDPVVILEELRTLTELSMRETSILLVMTGGLGPTEDDYTLEAVCRLKGVTTEESPVARQRIETFYKLRGRNFQEAMQTAIRQVFVPKGSIILNNSVGIAPGFITSLAENVHLGCMPGVPGEMTEMFREELAPWILKTYSSRELYSGFRFIWWMSESQFQKEFISKEKAIADGKAIWGVAAKRGYIRASFQSDSRALVDDLLRKLDTFYGTKSTPDIFEELPRMLLEKKITIGTAESCTGGLIAKTFTDVPGSSAYFYGGIISYDNSVKTGILGVKRNTLDEFGAVSRETAKEMAEGALDALGVDYSISVTGIAGPGGGTPQKKVGLVYFGIGQKNEETEIHEHYFPFPRSSFREFAAHTGIYLLYDRLKRSA.

This sequence belongs to the CinA family.

This chain is CinA-like protein, found in Leptospira borgpetersenii serovar Hardjo-bovis (strain L550).